A 447-amino-acid polypeptide reads, in one-letter code: UDP-glycosyltransferase 76E3 (447 aa).

UDP-alpha-D-glucose contacts are provided by residues Ser269, 328–330, 345–353, and 367–370; these read APQ, HCGWNSTLE, and QGEQ.

The protein belongs to the UDP-glycosyltransferase family.

The sequence is that of UDP-glycosyltransferase 76E3 (UGT76E3) from Arabidopsis thaliana (Mouse-ear cress).